The following is a 709-amino-acid chain: Polyribonucleotide nucleotidyltransferase (709 aa).

2 residues coordinate Mg(2+): Asp-486 and Asp-492. The KH domain maps to 553–612 (PRIHTIKINADKIKDVIGKGGSVIRALTEETGTTIEIEDDGTVKIAATSGEQAKQAIARI). An S1 motif domain is found at 622–690 (GRIYNGKVTR…RQGRIRLSMK (69 aa)). Residues 690-709 (KEAQATQQEAAETSSEDPAN) form a disordered region. Positions 691–702 (EAQATQQEAAET) are enriched in low complexity.

The protein belongs to the polyribonucleotide nucleotidyltransferase family. Component of the RNA degradosome, which is a multiprotein complex involved in RNA processing and mRNA degradation. It depends on Mg(2+) as a cofactor.

It is found in the cytoplasm. The enzyme catalyses RNA(n+1) + phosphate = RNA(n) + a ribonucleoside 5'-diphosphate. In terms of biological role, involved in mRNA degradation. Catalyzes the phosphorolysis of single-stranded polyribonucleotides processively in the 3'- to 5'-direction. This Proteus mirabilis (strain HI4320) protein is Polyribonucleotide nucleotidyltransferase.